A 33-amino-acid polypeptide reads, in one-letter code: Alpha-amanitin proprotein (33 aa).

A propeptide spanning residues 1 to 10 is cleaved from the precursor; that stretch reads MSDINATRLP. Ile11 carries the post-translational modification (3R,4R)-4,5-dihydroxyisoleucine; in form alpha-amanitin. Ile11 carries the post-translational modification (3R,4S)-4-hydroxyisoleucine; in form gamma-amanitin. The cyclopeptide (Ile-Pro) cross-link spans 11–18; it reads IWGIGCNP. A cross-link (2'-cysteinyl-6'-hydroxytryptophan sulfoxide (Trp-Cys)) is located at residues 12–16; that stretch reads WGIGC. Pro18 is subject to 4-hydroxyproline. A propeptide spanning residues 19–33 is cleaved from the precursor; it reads CVGDEVTALITRGEA.

The protein belongs to the MSDIN fungal toxin family. Processed by the macrocyclase-peptidase enzyme POPB to yield a toxic cyclic decapeptide. POPB first removes 10 residues from the N-terminus. Conformational trapping of the remaining peptide forces the enzyme to release this intermediate rather than proceed to macrocyclization. The enzyme rebinds the remaining peptide in a different conformation and catalyzes macrocyclization of the N-terminal 8 residues.

Its function is as follows. Major toxin belonging to the bicyclic octapeptides amatoxins that acts by binding non-competitively to RNA polymerase II and greatly slowing the elongation of transcripts from target promoters. The polypeptide is Alpha-amanitin proprotein (Amanita pallidorosea).